Reading from the N-terminus, the 368-residue chain is Cytochrome b (368 aa).

4 helical membrane-spanning segments follow: residues F25 to M45, W69 to I90, W105 to L125, and F170 to I190. Heme b-binding residues include H75 and H89. Residues H174 and H188 each contribute to the heme b site. H193 is an a ubiquinone binding site. The next 4 helical transmembrane spans lie at Y218–T238, L280–H300, L312–T332, and F339–P358.

This sequence belongs to the cytochrome b family. The cytochrome bc1 complex contains 3 respiratory subunits (MT-CYB, CYC1 and UQCRFS1), 2 core proteins (UQCRC1 and UQCRC2) and probably 6 low-molecular weight proteins. The cofactor is heme b.

It is found in the mitochondrion inner membrane. Functionally, component of the ubiquinol-cytochrome c reductase complex (complex III or cytochrome b-c1 complex) that is part of the mitochondrial respiratory chain. The b-c1 complex mediates electron transfer from ubiquinol to cytochrome c. Contributes to the generation of a proton gradient across the mitochondrial membrane that is then used for ATP synthesis. This chain is Cytochrome b (MT-CYB), found in Notechis ater (Black tiger snake).